The following is a 159-amino-acid chain: Major allergen Mal d 1 (159 aa).

This sequence belongs to the BetVI family.

This Malus domestica (Apple) protein is Major allergen Mal d 1.